We begin with the raw amino-acid sequence, 613 residues long: Isocitrate dehydrogenase kinase/phosphatase (613 aa).

ATP is bound by residues 328–334 (APGIRGL) and Lys-349. Asp-384 is an active-site residue.

The protein belongs to the AceK family.

It is found in the cytoplasm. It carries out the reaction L-seryl-[isocitrate dehydrogenase] + ATP = O-phospho-L-seryl-[isocitrate dehydrogenase] + ADP + H(+). In terms of biological role, bifunctional enzyme which can phosphorylate or dephosphorylate isocitrate dehydrogenase (IDH) on a specific serine residue. This is a regulatory mechanism which enables bacteria to bypass the Krebs cycle via the glyoxylate shunt in response to the source of carbon. When bacteria are grown on glucose, IDH is fully active and unphosphorylated, but when grown on acetate or ethanol, the activity of IDH declines drastically concomitant with its phosphorylation. This is Isocitrate dehydrogenase kinase/phosphatase from Cupriavidus necator (strain ATCC 17699 / DSM 428 / KCTC 22496 / NCIMB 10442 / H16 / Stanier 337) (Ralstonia eutropha).